Reading from the N-terminus, the 1516-residue chain is Myosin-52 (1516 aa).

The 56-residue stretch at 7–62 (YKGLQCWIPDEQSQWIPGSIKDCRVEGEKAFLTVQDENENETVITVKPDDLNYEGR) folds into the Myosin N-terminal SH3-like domain. In terms of domain architecture, Myosin motor spans 73–766 (SDADDLTDLS…VTPLLESARD (694 aa)). 167-174 (GESGAGKT) lines the ATP pocket. The actin-binding stretch occupies residues 647-669 (LVSLMSTINETNAHYIRCIKPNE). 5 consecutive IQ domains span residues 793–813 (RKRVRSFQAVAHGFLSRRHTE), 818–838 (SSNIIKLQSLWRTALKRKEFI), 840–865 (TKNSILKVQSIIRGFLLRQTLEEKTK), 866–886 (HDATLIIQSLWLTFKAHKHYK), and 888–917 (LQYYAVRIQSLWRMKLAKRQLTELKIESTK). Residues 926–1034 (YRLESRLFEI…LKSQLKNYDM (109 aa)) are a coiled coil. A phosphoserine mark is found at Ser1065 and Ser1072. A Dilute domain is found at 1163 to 1431 (ERYCVHTLEY…SELSKNIVAE (269 aa)).

This sequence belongs to the TRAFAC class myosin-kinesin ATPase superfamily. Myosin family.

The protein localises to the cytoplasm. In terms of biological role, involved in cell wall deposition where it has a role in the localization of mok1. The sequence is that of Myosin-52 (myo52) from Schizosaccharomyces pombe (strain 972 / ATCC 24843) (Fission yeast).